Consider the following 912-residue polypeptide: Protein transport protein SEC24-2 (912 aa).

Over residues 1–11 (MSNPSRPKKRV) the composition is skewed to basic residues. Disordered regions lie at residues 1–83 (MSNP…QQIS) and 102–129 (PNAYYQPNNGNNIQPTGENKPSLTPGRP). Composition is skewed to polar residues over residues 33–45 (SGQTMQSQVSGSA), 53–74 (GQFTQPMNASDAQNQPQFMTPA), and 106–129 (YQPNNGNNIQPTGENKPSLTPGRP). C226, C229, C248, and C251 together coordinate Zn(2+). Residues 226 to 251 (CRRCRGYLNPFVKILQVESKWRCNFC) are zinc finger-like.

It belongs to the SEC23/SEC24 family. SEC24 subfamily. In terms of assembly, the COPII coat is composed of at least 5 proteins: the SEC23/24 complex, the SEC13/31 complex, and the protein SAR1. Golgi apparatus membrane; Peripheral membrane protein; Cytoplasmic side.

The protein localises to the cytoplasm. The protein resides in the cytoplasmic vesicle. Its subcellular location is the COPII-coated vesicle membrane. It is found in the endoplasmic reticulum membrane. It localises to the golgi apparatus membrane. Component of the coat protein complex II (COPII) which promotes the formation of transport vesicles from the endoplasmic reticulum (ER). The coat has two main functions, the physical deformation of the endoplasmic reticulum membrane into vesicles and the selection of cargo molecules. The polypeptide is Protein transport protein SEC24-2 (SEC242) (Naumovozyma castellii (Yeast)).